Here is a 222-residue protein sequence, read N- to C-terminus: Germin-like protein subfamily 1 member 4 (222 aa).

A signal peptide spans 1–24; that stretch reads MEGLLQFLLAKIILLALASSFVYC. Cys-34 and Cys-50 are disulfide-bonded. N-linked (GlcNAc...) asparagine glycosylation occurs at Asn-38. The region spanning 64–215 is the Cupin type-1 domain; the sequence is SGLNVPGNTI…AFALDYNKVK (152 aa). 2 residues coordinate Mn(2+): His-112 and His-114. Residue Asn-139 is glycosylated (N-linked (GlcNAc...) asparagine). His-161 contacts Mn(2+).

The protein belongs to the germin family. Oligomer (believed to be a pentamer but probably hexamer).

It localises to the secreted. The protein resides in the extracellular space. The protein localises to the apoplast. Its function is as follows. May play a role in plant defense. Probably has no oxalate oxidase activity even if the active site is conserved. This Arabidopsis thaliana (Mouse-ear cress) protein is Germin-like protein subfamily 1 member 4.